A 352-amino-acid chain; its full sequence is Ion-translocating oxidoreductase complex subunit D (352 aa).

5 consecutive transmembrane segments (helical) span residues 20 to 40, 42 to 62, 68 to 88, 89 to 109, and 123 to 143; these read IMLL…WFFG, GTLV…ALVL, PIAA…LAVS, IPPL…VIIA, and PAMI…TNWL. FMN phosphoryl threonine is present on Thr187. A run of 5 helical transmembrane segments spans residues 217 to 237, 244 to 264, 267 to 287, 301 to 321, and 322 to 342; these read GAGW…LLAI, IPVS…LFAP, LASP…FFIL, LIFG…GGYP, and DGVA…DYYT.

This sequence belongs to the NqrB/RnfD family. The complex is composed of six subunits: RsxA, RsxB, RsxC, RsxD, RsxE and RsxG. FMN serves as cofactor.

The protein localises to the cell inner membrane. In terms of biological role, part of a membrane-bound complex that couples electron transfer with translocation of ions across the membrane. Required to maintain the reduced state of SoxR. The polypeptide is Ion-translocating oxidoreductase complex subunit D (Escherichia fergusonii (strain ATCC 35469 / DSM 13698 / CCUG 18766 / IAM 14443 / JCM 21226 / LMG 7866 / NBRC 102419 / NCTC 12128 / CDC 0568-73)).